The following is a 579-amino-acid chain: Eukaryotic translation initiation factor 3 subunit D (579 aa).

Disordered regions lie at residues 1-20 (MASF…GPAS), 51-72 (NASG…RARD), and 109-170 (RRGG…FGWK). A compositionally biased stretch (low complexity) spans 51–64 (NASGASNDAANARG). Residues 120–167 (GGRGGRGGAGGAGAAGGRGASKFGAGAGRGARGGRGGAAGARRGGGRF) are compositionally biased toward gly residues. The segment at 307–321 (AFDYLTVNENAADPP) is RNA gate.

This sequence belongs to the eIF-3 subunit D family. As to quaternary structure, component of the eukaryotic translation initiation factor 3 (eIF-3) complex.

It is found in the cytoplasm. Functionally, mRNA cap-binding component of the eukaryotic translation initiation factor 3 (eIF-3) complex, which is involved in protein synthesis of a specialized repertoire of mRNAs and, together with other initiation factors, stimulates binding of mRNA and methionyl-tRNAi to the 40S ribosome. The eIF-3 complex specifically targets and initiates translation of a subset of mRNAs involved in cell proliferation. In the eIF-3 complex, eif3d specifically recognizes and binds the 7-methylguanosine cap of a subset of mRNAs. This Mycosarcoma maydis (Corn smut fungus) protein is Eukaryotic translation initiation factor 3 subunit D.